Reading from the N-terminus, the 368-residue chain is Histidinol-phosphate aminotransferase (368 aa).

Lys-229 is modified (N6-(pyridoxal phosphate)lysine).

It belongs to the class-II pyridoxal-phosphate-dependent aminotransferase family. Histidinol-phosphate aminotransferase subfamily. In terms of assembly, homodimer. Pyridoxal 5'-phosphate is required as a cofactor.

It carries out the reaction L-histidinol phosphate + 2-oxoglutarate = 3-(imidazol-4-yl)-2-oxopropyl phosphate + L-glutamate. It functions in the pathway amino-acid biosynthesis; L-histidine biosynthesis; L-histidine from 5-phospho-alpha-D-ribose 1-diphosphate: step 7/9. This is Histidinol-phosphate aminotransferase from Acidovorax ebreus (strain TPSY) (Diaphorobacter sp. (strain TPSY)).